The sequence spans 397 residues: UPF0261 protein mlr3387 (397 aa).

Belongs to the UPF0261 family.

In Mesorhizobium japonicum (strain LMG 29417 / CECT 9101 / MAFF 303099) (Mesorhizobium loti (strain MAFF 303099)), this protein is UPF0261 protein mlr3387.